Here is a 351-residue protein sequence, read N- to C-terminus: Dihydroorotate dehydrogenase (quinone) (351 aa).

Residues 61–65 and threonine 85 each bind FMN; that span reads AGLDK. Lysine 65 lines the substrate pocket. 110–114 serves as a coordination point for substrate; sequence NRMGF. The FMN site is built by asparagine 139 and asparagine 172. Asparagine 172 serves as a coordination point for substrate. Serine 175 functions as the Nucleophile in the catalytic mechanism. Asparagine 177 contacts substrate. FMN-binding residues include lysine 217 and threonine 245. 246–247 is a binding site for substrate; it reads NT. FMN is bound by residues glycine 268, glycine 297, and 318 to 319; that span reads YS.

The protein belongs to the dihydroorotate dehydrogenase family. Type 2 subfamily. In terms of assembly, monomer. Requires FMN as cofactor.

Its subcellular location is the cell membrane. The catalysed reaction is (S)-dihydroorotate + a quinone = orotate + a quinol. Its pathway is pyrimidine metabolism; UMP biosynthesis via de novo pathway; orotate from (S)-dihydroorotate (quinone route): step 1/1. Functionally, catalyzes the conversion of dihydroorotate to orotate with quinone as electron acceptor. The sequence is that of Dihydroorotate dehydrogenase (quinone) from Xanthomonas campestris pv. campestris (strain 8004).